Consider the following 174-residue polypeptide: C-type lectin domain family 2 member A (174 aa).

Topologically, residues 1–27 are cytoplasmic; it reads MINPELRDGRADGFIHRIVPKLIQNWK. The helical; Signal-anchor for type II membrane protein transmembrane segment at 28 to 48 threads the bilayer; sequence IGLMCFLSIIITTVCIIMIAT. The Extracellular portion of the chain corresponds to 49-174; the sequence is WSKHAKPVAC…WICSKPKYFL (126 aa). C58 and C69 are joined by a disulfide. The 110-residue stretch at 65-174 folds into the C-type lectin domain; the sequence is VRDKCFYFSD…WICSKPKYFL (110 aa). N-linked (GlcNAc...) asparagine glycans are attached at residues N78, N130, and N143. A disulfide bridge connects residues C86 and C167.

As to quaternary structure, homodimer; non-disulfide-linked. Interacts with KLRB1. Interacts with KLRF2. Post-translationally, N-glycosylated. As to expression, mainly expressed in skin. Also expressed in keratinocytes, spleen, thymus, small intestine, peripheral blood monocytes, bone marrow, ovary, testis and skin. High expression in CD8(+), B-lymphocytes and naive CD4(+) T-cells. Restricted mostly to proliferating lymphocytes. Not detected in myeloid leukocytes or natural killer (NK) cells.

It is found in the cell membrane. Membrane-bound protein expressed mainly on keratinocytes which acts as a ligand to stimulate the activating receptor NKp65/KLRF2, expressed on the surface of natural killer (NK) cells. Facilitates thereby dedicated immune recognition of keratinocytes leading to natural killer cell mediated cytotoxicity. Also plays a role in modulating the extent of T-cell expansion. The protein is C-type lectin domain family 2 member A (CLEC2A) of Homo sapiens (Human).